A 314-amino-acid polypeptide reads, in one-letter code: Methionyl-tRNA formyltransferase (314 aa).

A (6S)-5,6,7,8-tetrahydrofolate-binding site is contributed by 112-115 (SLLP).

This sequence belongs to the Fmt family.

It catalyses the reaction L-methionyl-tRNA(fMet) + (6R)-10-formyltetrahydrofolate = N-formyl-L-methionyl-tRNA(fMet) + (6S)-5,6,7,8-tetrahydrofolate + H(+). In terms of biological role, attaches a formyl group to the free amino group of methionyl-tRNA(fMet). The formyl group appears to play a dual role in the initiator identity of N-formylmethionyl-tRNA by promoting its recognition by IF2 and preventing the misappropriation of this tRNA by the elongation apparatus. This Legionella pneumophila (strain Corby) protein is Methionyl-tRNA formyltransferase.